The sequence spans 239 residues: MNKNIVIKSMAALAILTSVTGINAAVVDETQQIANAEKNVTQVKDTNVFPYNGVVSFKDATGFAIEKNTIITNKHVSKDYKVGDRITAHPNGDKGNGGIYKIKNISDYPGNEDISVMNVEENAVERGANGYNFNENVQAFNFAKDAKVDDKIKVIGYPLPAQNTFKQFESTGTVKSIKDNNLNFDAYIEPGNSGSPVLNLNNEVVGVVYGGIGKIGSEYNGAVYFTPQIKEFIQKHIEQ.

The first 36 residues, 1 to 36 (MNKNIVIKSMAALAILTSVTGINAAVVDETQQIANA), serve as a signal peptide directing secretion. Residues His-75, Asp-113, and Ser-193 each act as charge relay system in the active site.

Belongs to the peptidase S1B family.

Its subcellular location is the secreted. This is Serine protease SplC (splC) from Staphylococcus aureus (strain bovine RF122 / ET3-1).